The following is a 253-amino-acid chain: Major prion protein (253 aa).

The N-terminal stretch at 1–22 (MANLGCWMLVLFVATWSDLGLC) is a signal peptide. The interval 23-38 (KKRPKPGGWNTGGSRY) is interaction with ADGRG6. The segment at 23–230 (KKRPKPGGWN…ESQAYYQRGS (208 aa)) is interaction with GRB2, ERI3 and SYN1. The tract at residues 26-108 (PKPGGWNTGG…WNKPSKPKTN (83 aa)) is disordered. 5 tandem repeats follow at residues 51–59 (PQGGGGWGQ), 60–67 (PHGGGWGQ), 68–75 (PHGGGWGQ), 76–83 (PHGGGWGQ), and 84–91 (PHGGGWGQ). The interval 51–91 (PQGGGGWGQPHGGGWGQPHGGGWGQPHGGGWGQPHGGGWGQ) is 5 X 8 AA tandem repeats of P-H-G-G-G-W-G-Q. Positions 52 to 95 (QGGGGWGQPHGGGWGQPHGGGWGQPHGGGWGQPHGGGWGQGGGT) are enriched in gly residues. Cu(2+)-binding residues include histidine 61, glycine 62, glycine 63, histidine 69, glycine 70, glycine 71, histidine 77, glycine 78, glycine 79, histidine 85, glycine 86, and glycine 87. A disulfide bond links cysteine 179 and cysteine 214. N-linked (GlcNAc...) asparagine glycosylation is found at asparagine 181 and asparagine 197. The GPI-anchor amidated serine moiety is linked to residue serine 230. Residues 231-253 (SMVLFSSPPVILLISFLIFLIVG) constitute a propeptide, removed in mature form.

It belongs to the prion family. In terms of assembly, monomer and homodimer. Has a tendency to aggregate into amyloid fibrils containing a cross-beta spine, formed by a steric zipper of superposed beta-strands. Soluble oligomers may represent an intermediate stage on the path to fibril formation. Copper binding may promote oligomerization. Interacts with GRB2, APP, ERI3/PRNPIP and SYN1. Mislocalized cytosolically exposed PrP interacts with MGRN1; this interaction alters MGRN1 subcellular location and causes lysosomal enlargement. Interacts with APP. Interacts with KIAA1191. Interacts with ADGRG6.

It is found in the cell membrane. Its subcellular location is the golgi apparatus. In terms of biological role, its primary physiological function is unclear. May play a role in neuronal development and synaptic plasticity. May be required for neuronal myelin sheath maintenance. May promote myelin homeostasis through acting as an agonist for ADGRG6 receptor. May play a role in iron uptake and iron homeostasis. Soluble oligomers are toxic to cultured neuroblastoma cells and induce apoptosis (in vitro). Association with GPC1 (via its heparan sulfate chains) targets PRNP to lipid rafts. Also provides Cu(2+) or Zn(2+) for the ascorbate-mediated GPC1 deaminase degradation of its heparan sulfate side chains. This Gorilla gorilla gorilla (Western lowland gorilla) protein is Major prion protein (PRNP).